A 363-amino-acid chain; its full sequence is Uptake hydrogenase small subunit (363 aa).

Residues Met1–Ala43 constitute a signal peptide (tat-type signal). The [4Fe-4S] cluster site is built by Cys60, Cys63, Cys158, Cys192, His230, Cys233, Cys258, and Cys264. 3 residues coordinate [3Fe-4S] cluster: Cys273, Cys292, and Cys295.

This sequence belongs to the [NiFe]/[NiFeSe] hydrogenase small subunit family. As to quaternary structure, heterodimer of a large and a small subunit. [4Fe-4S] cluster is required as a cofactor. The cofactor is [3Fe-4S] cluster. Post-translationally, predicted to be exported by the Tat system. The position of the signal peptide cleavage has not been experimentally proven.

It localises to the cell membrane. The enzyme catalyses H2 + A = AH2. Its function is as follows. This enzyme recycles the H(2) produced by nitrogenase to increase the production of ATP and to protect nitrogenase against inhibition or damage by O(2) under carbon- or phosphate-limited conditions. This chain is Uptake hydrogenase small subunit (hupS), found in Alcaligenes hydrogenophilus.